The sequence spans 170 residues: MKFKKTIGAMALTTMFVAVSASAVEKNITVTASVDPVIDLLQADGNALPSAVKLAYSPASKTFESYRVMTQVHTNDATKKVIVKLADTPQLTDVLNSTVQMPISVSWGGQVLSTTAKEFEAAALGYSASGVNGVSSSQELVISAAPKTAGTAPTAGNYSGVVSLVMTLGS.

The N-terminal stretch at 1–23 (MKFKKTIGAMALTTMFVAVSASA) is a signal peptide.

Belongs to the fimbrial CS1 protein family. As to quaternary structure, CFA/I fimbriae are rather rigid, thread-like filaments of 0.5-1 micrometer, with an apparent axial hole, and a diameter of 7 nanometers. A single CFA/I fimbria consists of about 100 identical protein subunits.

The protein resides in the fimbrium. Functionally, fimbriae (also called pili), polar filaments radiating from the surface of the bacterium to a length of 0.5-1.5 micrometers and numbering 100-300 per cell, enable bacteria to colonize the epithelium of specific host organs. The polypeptide is CFA/I fimbrial subunit B (cfaB) (Escherichia coli O78:H11 (strain H10407 / ETEC)).